The primary structure comprises 426 residues: Pyrophosphate--fructose 6-phosphate 1-phosphotransferase 1 (426 aa).

G15 serves as a coordination point for diphosphate. Mg(2+) is bound at residue D114. Substrate is bound by residues 140-142 (TID), 186-188 (MGR), E247, and 308-311 (YELR). D142 serves as the catalytic Proton acceptor.

The protein belongs to the phosphofructokinase type A (PFKA) family. PPi-dependent PFK group II subfamily. Clade 'Short' sub-subfamily. In terms of assembly, homotetramer. Requires Mg(2+) as cofactor.

The protein localises to the cytoplasm. It catalyses the reaction beta-D-fructose 6-phosphate + diphosphate = beta-D-fructose 1,6-bisphosphate + phosphate + H(+). Its pathway is carbohydrate degradation; glycolysis; D-glyceraldehyde 3-phosphate and glycerone phosphate from D-glucose: step 3/4. Its activity is regulated as follows. Non-allosteric. In terms of biological role, catalyzes the phosphorylation of D-fructose 6-phosphate, the first committing step of glycolysis. Uses inorganic phosphate (PPi) as phosphoryl donor instead of ATP like common ATP-dependent phosphofructokinases (ATP-PFKs), which renders the reaction reversible, and can thus function both in glycolysis and gluconeogenesis. Consistently, PPi-PFK can replace the enzymes of both the forward (ATP-PFK) and reverse (fructose-bisphosphatase (FBPase)) reactions. This is Pyrophosphate--fructose 6-phosphate 1-phosphotransferase 1 (Pfk1) from Trichomonas vaginalis (strain ATCC PRA-98 / G3).